The following is a 257-amino-acid chain: Imidazole glycerol phosphate synthase subunit HisF (257 aa).

Catalysis depends on residues aspartate 11 and aspartate 130.

Belongs to the HisA/HisF family. As to quaternary structure, heterodimer of HisH and HisF.

Its subcellular location is the cytoplasm. It catalyses the reaction 5-[(5-phospho-1-deoxy-D-ribulos-1-ylimino)methylamino]-1-(5-phospho-beta-D-ribosyl)imidazole-4-carboxamide + L-glutamine = D-erythro-1-(imidazol-4-yl)glycerol 3-phosphate + 5-amino-1-(5-phospho-beta-D-ribosyl)imidazole-4-carboxamide + L-glutamate + H(+). Its pathway is amino-acid biosynthesis; L-histidine biosynthesis; L-histidine from 5-phospho-alpha-D-ribose 1-diphosphate: step 5/9. In terms of biological role, IGPS catalyzes the conversion of PRFAR and glutamine to IGP, AICAR and glutamate. The HisF subunit catalyzes the cyclization activity that produces IGP and AICAR from PRFAR using the ammonia provided by the HisH subunit. In Vibrio campbellii (strain ATCC BAA-1116), this protein is Imidazole glycerol phosphate synthase subunit HisF.